We begin with the raw amino-acid sequence, 845 residues long: Poly(A) RNA polymerase gld-4 (845 aa).

The segment at 1-55 (MNEDSRLSSSQQPSTSTPRSSIPSTMNSDEPNTCRRLSQSQEQPSTSRTCKSETP) is disordered. A compositionally biased stretch (low complexity) spans 7–25 (LSSSQQPSTSTPRSSIPST). Residues 26–49 (MNSDEPNTCRRLSQSQEQPSTSRT) show a composition bias toward polar residues. Residues Asp-139 and Asp-141 each coordinate Mg(2+). One can recognise a PAP-associated domain in the interval 276–335 (NLGHLLLRFLELYSLEFNFEEMGISPGQCCYIPKSASGARYGHKQAQPGNLALEDPLLTA). Residues 482 to 506 (KSLEKMPACDDNKKEEELVATRETD) are compositionally biased toward basic and acidic residues. 2 disordered regions span residues 482-733 (KSLE…SEEP) and 788-845 (NALT…RLQR). Positions 535 to 551 (TSTQSVNTSATVSTAAS) are enriched in low complexity. Polar residues-rich tracts occupy residues 561–571 (PGLSSSMGNQS) and 579–588 (GINNRNNSAV). Basic and acidic residues predominate over residues 605-620 (RESKRTQTTSEDKMQD). Basic residues predominate over residues 643 to 653 (SHKHRNAHPQR). Composition is skewed to polar residues over residues 654 to 666 (QRPSIRNLSQGSD), 695 to 732 (RQQTNTRNCGPTNNIPYDSFRSQNKNSTLDGSNNSSEE), 788 to 805 (NALTTSPMTPPSAHTSMQ), and 819 to 828 (DNNSATSSTD).

As to quaternary structure, interacts with gls-1 isoform C. Mg(2+) is required as a cofactor. Requires Mn(2+) as cofactor. In terms of tissue distribution, germline-specific.

Its subcellular location is the cytoplasm. It is found in the cytoplasmic granule. The protein resides in the perinuclear region. The enzyme catalyses RNA(n) + ATP = RNA(n)-3'-adenine ribonucleotide + diphosphate. Its function is as follows. Cytoplasmic poly(A) RNA polymerase that adds successive AMP monomers to the 3'-end of specific RNAs, forming a poly(A) tail. The enzymatic activity is enhanced by its interaction with gls-1. Required, together with gld-2, for early meiotic progression in male and female germ cells and for gld-1 protein accumulation in the hermaphrodite germline. In the germline, forms a complex with gls-1 which directly binds to gld-1 mRNA and prevents its degradation. This is Poly(A) RNA polymerase gld-4 from Caenorhabditis elegans.